Reading from the N-terminus, the 76-residue chain is UPF0729 protein C18orf32 homolog (76 aa).

A necessary for its localzation to the endoplasmic reticulum and lipid droplets region spans residues 1 to 37 (MVCIPCIVIPVLLWVYKKFLEPYIYPLISPFVSRMWP). Basic and acidic residues predominate over residues 47-56 (KNKGKVDYKG). Positions 47–76 (KNKGKVDYKGADINGLPTRGPTEMCDKKKD) are disordered.

The protein belongs to the UPF0729 family. Interacts with DERL1 and AMFR. Undergoes ER-associated degradation (ERAD).

It localises to the endoplasmic reticulum. It is found in the lipid droplet. May activate the NF-kappa-B signaling pathway. The polypeptide is UPF0729 protein C18orf32 homolog (Bos taurus (Bovine)).